Reading from the N-terminus, the 367-residue chain is MNILSLRLKNFRNYKEAEVSLSPNINYIFGENAQGKTNLIEALYVLSLGRSFRTSHLTEAIFFGSSYFFLEMTFEKDGVPHTLSTYVDKHGKKIFCDQSPIKTLSQLIGMIPIVLFSAKDRCLIAGAPSDRRLFLNLLLSQCDPQYKHSLSYYHRALLQRNTLLKTKQTSTLSVWDEQLATLGSYLCLSRYTCCAQLNQLIQTLWNNSLSERLFIKFKSSLIKQCKISQEAVKNELHKQLTASLHRDLELGNTSVGPHREDFTLMINDLPVAQFSSEGQKHSLLAVLKLAESLYIKSLHNVYPLFCMDDIHAGLDNQRISQLLGLAPSLGQTLITSTTLPHQTLSEANRIFSVNQAQISIHSHAIIK.

30-37 (GENAQGKT) serves as a coordination point for ATP.

This sequence belongs to the RecF family.

The protein localises to the cytoplasm. Its function is as follows. The RecF protein is involved in DNA metabolism; it is required for DNA replication and normal SOS inducibility. RecF binds preferentially to single-stranded, linear DNA. It also seems to bind ATP. The protein is DNA replication and repair protein RecF of Chlamydia abortus (strain DSM 27085 / S26/3) (Chlamydophila abortus).